Here is a 175-residue protein sequence, read N- to C-terminus: ATP-dependent protease subunit HslV (175 aa).

Thr-2 is an active-site residue. 3 residues coordinate Na(+): Gly-158, Cys-161, and Thr-164.

The protein belongs to the peptidase T1B family. HslV subfamily. A double ring-shaped homohexamer of HslV is capped on each side by a ring-shaped HslU homohexamer. The assembly of the HslU/HslV complex is dependent on binding of ATP.

It localises to the cytoplasm. It carries out the reaction ATP-dependent cleavage of peptide bonds with broad specificity.. Allosterically activated by HslU binding. Functionally, protease subunit of a proteasome-like degradation complex believed to be a general protein degrading machinery. This Histophilus somni (strain 129Pt) (Haemophilus somnus) protein is ATP-dependent protease subunit HslV.